The primary structure comprises 151 residues: MKQIDLKILDGRIGNEFPLPAYATEGSAGLDLRALTESALTVAPGQTVLIPTGISIYIADPNLAAVILPRSGLGHKNGIVLGNLVGLIDSDYQGPLMVSLWNRSDKPFTVEVGDRIAQLVFVPVVQASFNIVNDFAQTERGEGGFGHSGKQ.

Residues 70–72, Asn-83, 87–89, and Met-97 each bind substrate; these read RSG and LID.

This sequence belongs to the dUTPase family. Mg(2+) serves as cofactor.

The catalysed reaction is dUTP + H2O = dUMP + diphosphate + H(+). It participates in pyrimidine metabolism; dUMP biosynthesis; dUMP from dCTP (dUTP route): step 2/2. In terms of biological role, this enzyme is involved in nucleotide metabolism: it produces dUMP, the immediate precursor of thymidine nucleotides and it decreases the intracellular concentration of dUTP so that uracil cannot be incorporated into DNA. In Actinobacillus pleuropneumoniae serotype 7 (strain AP76), this protein is Deoxyuridine 5'-triphosphate nucleotidohydrolase.